Consider the following 344-residue polypeptide: N-acetyl-gamma-glutamyl-phosphate reductase (344 aa).

Cys150 is an active-site residue.

It belongs to the NAGSA dehydrogenase family. Type 1 subfamily.

The protein resides in the cytoplasm. The enzyme catalyses N-acetyl-L-glutamate 5-semialdehyde + phosphate + NADP(+) = N-acetyl-L-glutamyl 5-phosphate + NADPH + H(+). It participates in amino-acid biosynthesis; L-arginine biosynthesis; N(2)-acetyl-L-ornithine from L-glutamate: step 3/4. Its function is as follows. Catalyzes the NADPH-dependent reduction of N-acetyl-5-glutamyl phosphate to yield N-acetyl-L-glutamate 5-semialdehyde. This chain is N-acetyl-gamma-glutamyl-phosphate reductase, found in Pseudomonas syringae pv. syringae (strain B728a).